Consider the following 160-residue polypeptide: Large ribosomal subunit protein eL21 (160 aa).

2 stretches are compositionally biased toward basic and acidic residues: residues 112–123 (NDQKKKEAKEKG) and 136–145 (REAHFVRTNG). The interval 112–145 (NDQKKKEAKEKGTWVQLKRQPAPPREAHFVRTNG) is disordered.

The protein belongs to the eukaryotic ribosomal protein eL21 family. In terms of assembly, component of the large ribosomal subunit.

Its subcellular location is the cytoplasm. It localises to the cytosol. It is found in the endoplasmic reticulum. Its function is as follows. Component of the large ribosomal subunit. The ribosome is a large ribonucleoprotein complex responsible for the synthesis of proteins in the cell. This chain is Large ribosomal subunit protein eL21 (RPL21), found in Capra hircus (Goat).